A 384-amino-acid polypeptide reads, in one-letter code: S-adenosylmethionine synthase (384 aa).

His15 is an ATP binding site. Asp17 lines the Mg(2+) pocket. Glu43 provides a ligand contact to K(+). The L-methionine site is built by Glu56 and Gln99. The tract at residues 99 to 109 (QSPDINQGVDK) is flexible loop. Residues 164-166 (DAK), 230-231 (RF), Asp239, 245-246 (RK), Ala262, and Lys266 each bind ATP. Asp239 lines the L-methionine pocket. Lys270 provides a ligand contact to L-methionine.

Belongs to the AdoMet synthase family. Homotetramer; dimer of dimers. Mg(2+) serves as cofactor. Requires K(+) as cofactor.

The protein localises to the cytoplasm. The enzyme catalyses L-methionine + ATP + H2O = S-adenosyl-L-methionine + phosphate + diphosphate. It participates in amino-acid biosynthesis; S-adenosyl-L-methionine biosynthesis; S-adenosyl-L-methionine from L-methionine: step 1/1. Catalyzes the formation of S-adenosylmethionine (AdoMet) from methionine and ATP. The overall synthetic reaction is composed of two sequential steps, AdoMet formation and the subsequent tripolyphosphate hydrolysis which occurs prior to release of AdoMet from the enzyme. The chain is S-adenosylmethionine synthase from Aliivibrio fischeri (strain ATCC 700601 / ES114) (Vibrio fischeri).